Here is a 284-residue protein sequence, read N- to C-terminus: Agamous-like MADS-box protein AGL49 (284 aa).

The disordered stretch occupies residues 1–20; it reads MAPRQKKPNKSDDDDGDLHR. In terms of domain architecture, MADS-box spans 21–66; the sequence is KKQSFFKQRFPGFKKKASELSVLCGNSVGFICYGPDNDLHVWPQSQ.

Interacts with MEE14/CBP1.

The protein resides in the nucleus. Probable transcription factor that may function in the maintenance of the proper function of the central cell in pollen tube attraction. This Arabidopsis thaliana (Mouse-ear cress) protein is Agamous-like MADS-box protein AGL49.